Consider the following 90-residue polypeptide: uncharacterized protein (90 aa).

This is an uncharacterized protein from Thermoproteus tenax (TTV1).